Here is a 600-residue protein sequence, read N- to C-terminus: MLRSLLLRRSNARSLRPPFPPLRTLCTSGQTLTPAPPPPPPPPPPISSSASEKEFRKYAGYAALALFSGAATYFSFPFPENAKHKKAQIFRYAPLPEDLHTVSNWSGTHEVQTRNFNQPETLADLEALVKEAHEKKNRIRPVGSGLSPNGIGLSRSGMVNLALMDKVLEVDKEKKRVRVQAGIRVQQLVDAIQEYGLTLQNFASIREQQIGGIIQVGAHGTGARLPPIDEQVIGMKLVTPAKGTIELSKDNDPELFHLARCGLGGLGVVAEVTLQCVERQELLEHTYVSTLEEIKKNHKKLLSTNKHVKYLYIPYTDTVVVVTCNPVSKWSGAPKDKPKYTTEEALKHVRDLYRESIVKYRVQDSSKKTPDSREPDINELSFTELRDKLIALDPLNDVHVGKVNQAEAEFWKKSEGYRVGWSDEILGFDCGGQQWVSETCFPAGTLAKPSMKDLEYIEQLKELIQKEAIPAPSPIEQRWTGRSKSPMSPAFSTAEEDIFSWVGIIMYLPTADPRQRKDITDEFFHYRHLTQAKLWDQYSAYEHWAKIEIPKDKEELEALQERLRKRFPVDAYNKARRELDPNRILSNNMVEKLFPVSKTA.

The transit peptide at 1 to 25 (MLRSLLLRRSNARSLRPPFPPLRTL) directs the protein to the mitochondrion. The interval 16–51 (RPPFPPLRTLCTSGQTLTPAPPPPPPPPPPISSSAS) is disordered. Positions 26-91 (CTSGQTLTPA…AKHKKAQIFR (66 aa)) are cleaved as a propeptide — removed in mature form. The span at 34-46 (PAPPPPPPPPPPI) shows a compositional bias: pro residues. A helical membrane pass occupies residues 58–74 (YAGYAALALFSGAATYF). In terms of domain architecture, FAD-binding PCMH-type spans 108–279 (THEVQTRNFN…AEVTLQCVER (172 aa)).

Requires FAD as cofactor.

The protein resides in the mitochondrion membrane. The enzyme catalyses L-galactono-1,4-lactone + 4 Fe(III)-[cytochrome c] = L-dehydroascorbate + 4 Fe(II)-[cytochrome c] + 5 H(+). It functions in the pathway cofactor biosynthesis; L-ascorbate biosynthesis. With respect to regulation, inhibited by sulfhydryl-modifying agents such as N-ethylmaleimide, monoiodoacetic acid and p-hydroxymercuribenzoic acid. No inhibition by riboflavin and lycorine. In terms of biological role, involved in the biosynthesis of ascorbic acid. Uses L-galactono-1,4-lactone as substrate, but not L-gulono-1,4-lactone, D-galactono-1,4-lactone, D-gulono-1,4-lactone, D-erythronic-1,4-lactone, D-xylonic-1,4-lactone, L-mannono-1,4-lactone, D-galactonic acid, D-glucuronic acid or D-gluconic acid. FAD, NAD, NADP and O(2) cannot act as electron acceptor. This is L-galactono-1,4-lactone dehydrogenase, mitochondrial from Brassica oleracea (Wild cabbage).